The primary structure comprises 610 residues: Dopamine beta-hydroxylase (610 aa).

Residues 1–9 (MKVPSPSVR) lie on the Cytoplasmic side of the membrane. Residues 10-30 (EAASMYGTAVAIFLVILVAAL) form a helical; Signal-anchor for type II membrane protein membrane-spanning segment. Over 31 to 610 (QGSEPPESPF…TVVDIGGGKG (580 aa)) the chain is Intragranular. One can recognise a DOMON domain in the interval 50-166 (GTLELSWNVS…GTVHLVYGIL (117 aa)). N-linked (GlcNAc...) asparagine glycans are attached at residues Asn-57, Asn-177, and Asn-194. Disulfide bonds link Cys-147–Cys-589, Cys-225–Cys-276, Cys-262–Cys-288, Cys-383–Cys-496, Cys-387–Cys-558, and Cys-459–Cys-481. Residue Tyr-223 is part of the active site. Cu(2+) is bound by residues His-255 and His-256. Cu(2+) is bound by residues His-326, His-405, His-407, and Met-480. The active site involves His-405. Positions 586 to 610 (TPRCPASRGRSPAGPTVVDIGGGKG) are disordered.

The protein belongs to the copper type II ascorbate-dependent monooxygenase family. In terms of assembly, homotetramer; composed of two disulfide-linked dimers. Cu(2+) serves as cofactor. Proteolytic cleavage after the membrane-anchor leads to the release of the soluble form. In terms of processing, N-glycosylated. As to expression, detected in adrenal medulla chromaffin cells.

The protein resides in the cytoplasmic vesicle. It is found in the secretory vesicle lumen. The protein localises to the secretory vesicle. Its subcellular location is the chromaffin granule lumen. It localises to the secreted. The protein resides in the secretory vesicle membrane. It is found in the chromaffin granule membrane. The enzyme catalyses dopamine + 2 L-ascorbate + O2 = (R)-noradrenaline + 2 monodehydro-L-ascorbate radical + H2O. Its pathway is catecholamine biosynthesis; (R)-noradrenaline biosynthesis; (R)-noradrenaline from dopamine: step 1/1. Catalyzes the hydroxylation of dopamine to noradrenaline (also known as norepinephrine), and is thus vital for regulation of these neurotransmitters. This is Dopamine beta-hydroxylase (DBH) from Equus caballus (Horse).